Consider the following 418-residue polypeptide: Actin-related protein 3B (418 aa).

This sequence belongs to the actin family. ARP3 subfamily. Interacts with the Arp2/3 complex composed of ARP2, ARP3, ARPC1B, ARPC1B/p41-ARC, ARPC2/p34-ARC, ARPC3/p21-ARC, ARPC4/p20-ARC and ARPC5/p16-ARC.

Its subcellular location is the cytoplasm. The protein resides in the cytoskeleton. It is found in the cell projection. Its function is as follows. Plays a role in the organization of the actin cytoskeleton. May function as ATP-binding component of the Arp2/3 complex which is involved in regulation of actin polymerization and together with an activating nucleation-promoting factor (NPF) mediates the formation of branched actin networks. May decrease the metastatic potential of tumors. The chain is Actin-related protein 3B (Actr3b) from Mus musculus (Mouse).